The sequence spans 138 residues: ATP synthase epsilon chain (138 aa).

Belongs to the ATPase epsilon chain family. F-type ATPases have 2 components, CF(1) - the catalytic core - and CF(0) - the membrane proton channel. CF(1) has five subunits: alpha(3), beta(3), gamma(1), delta(1), epsilon(1). CF(0) has three main subunits: a, b and c.

The protein resides in the cell inner membrane. Functionally, produces ATP from ADP in the presence of a proton gradient across the membrane. The chain is ATP synthase epsilon chain from Psychrobacter arcticus (strain DSM 17307 / VKM B-2377 / 273-4).